A 316-amino-acid polypeptide reads, in one-letter code: MARSKIALIGGGQIGGVLAQLAALRELGDVVLFDIVEGLPQGKTLDIAEAAPVDGFDVSLKGTNTYEDIKGADVVIVTAGLPRKPGMSRDDLIAVNSKIMTTVAEGIKQYAPNAFVIVISNPLDAMVTLCQRITGFPHNRVVGQAGVLDSARFAAFIAWELGVSVKDVTAVTLGGHGDDMVPLVRYTSVCGVPVMELLEQKYGAAKAAEVMAAMVKRTRGAGGEVVALLKTGSAFYSPASSAIAMAESFLKDQKRVLPTCAFLKGEFGVDGLYVGVPVVIGAGGAERVLQLKLNAEEQAMMDKSVKAVKDLVATLK.

Residues 10 to 15 and aspartate 34 contribute to the NAD(+) site; that span reads GGGQIG. Residues arginine 83 and arginine 89 each coordinate substrate. Residues asparagine 96 and 119-121 each bind NAD(+); that span reads ISN. Residues asparagine 121 and arginine 152 each contribute to the substrate site. The active-site Proton acceptor is histidine 176.

Belongs to the LDH/MDH superfamily. MDH type 3 family.

The enzyme catalyses (S)-malate + NAD(+) = oxaloacetate + NADH + H(+). In terms of biological role, catalyzes the reversible oxidation of malate to oxaloacetate. This chain is Malate dehydrogenase 2, found in Anaeromyxobacter dehalogenans (strain 2CP-C).